The sequence spans 65 residues: Transcriptional regulatory protein SenS (65 aa).

The segment at residues 11–31 (RFRKRKTYGNQILPLELLIEK) is a DNA-binding region (H-T-H motif).

It to B.natto SenN.

Its function is as follows. Regulates the expression of extracellular-protein genes of Bacillus subtilis. The sequence is that of Transcriptional regulatory protein SenS (senS) from Bacillus subtilis (strain 168).